The following is a 437-amino-acid chain: Acyl-coenzyme A thioesterase 2, chloroplastic (437 aa).

The N-terminal 13 residues, 1-13 (MDLSSSPNHPITV), are a transit peptide targeting the chloroplast. 2 consecutive HotDog ACOT-type domains span residues 89-211 (ILYN…RDSK) and 287-404 (RDTR…RPEA).

Belongs to the acyl coenzyme A hydrolase family. In terms of tissue distribution, mostly expressed at low levels in glandular trichomes (lupulin glands), and, to a lower extent, in stems, leaves, flowers and cones.

The protein localises to the plastid. It is found in the chloroplast. Its function is as follows. Acyl-CoA thioesterases are a group of enzymes that catalyze the hydrolysis of acyl-CoAs to the free fatty acid and coenzyme A (CoASH), providing the potential to regulate intracellular levels of acyl-CoAs, free fatty acids and CoASH. In Humulus lupulus (European hop), this protein is Acyl-coenzyme A thioesterase 2, chloroplastic.